The chain runs to 1415 residues: DNA-directed RNA polymerase subunit beta' (1415 aa).

Zn(2+) contacts are provided by Cys-71, Cys-73, Cys-86, and Cys-89. Mg(2+) contacts are provided by Asp-461, Asp-463, and Asp-465. 4 residues coordinate Zn(2+): Cys-815, Cys-889, Cys-896, and Cys-899.

The protein belongs to the RNA polymerase beta' chain family. The RNAP catalytic core consists of 2 alpha, 1 beta, 1 beta' and 1 omega subunit. When a sigma factor is associated with the core the holoenzyme is formed, which can initiate transcription. Requires Mg(2+) as cofactor. The cofactor is Zn(2+).

The enzyme catalyses RNA(n) + a ribonucleoside 5'-triphosphate = RNA(n+1) + diphosphate. Its function is as follows. DNA-dependent RNA polymerase catalyzes the transcription of DNA into RNA using the four ribonucleoside triphosphates as substrates. The sequence is that of DNA-directed RNA polymerase subunit beta' from Haemophilus influenzae (strain ATCC 51907 / DSM 11121 / KW20 / Rd).